The primary structure comprises 347 residues: 3-isopropylmalate dehydrogenase (347 aa).

The substrate site is built by R94, R104, R128, and D219. 3 residues coordinate Mg(2+): D219, D243, and D247. 279–291 (GSAPDIAGQGKAD) provides a ligand contact to NAD(+).

Belongs to the isocitrate and isopropylmalate dehydrogenases family. LeuB type 2 subfamily. In terms of assembly, homodimer. The cofactor is Mg(2+). Mn(2+) serves as cofactor.

Its subcellular location is the cytoplasm. The catalysed reaction is (2R,3S)-3-isopropylmalate + NAD(+) = 4-methyl-2-oxopentanoate + CO2 + NADH. It functions in the pathway amino-acid biosynthesis; L-leucine biosynthesis; L-leucine from 3-methyl-2-oxobutanoate: step 3/4. Catalyzes the oxidation of 3-carboxy-2-hydroxy-4-methylpentanoate (3-isopropylmalate) to 3-carboxy-4-methyl-2-oxopentanoate. The product decarboxylates to 4-methyl-2 oxopentanoate. This is 3-isopropylmalate dehydrogenase from Streptomyces coelicolor (strain ATCC BAA-471 / A3(2) / M145).